Consider the following 209-residue polypeptide: MAALVKPMLPLATFGGQQNGCLQHQLAKLVQARARRGYEHDIGQLAEKLKKRQVARGHLGDVLEQMGRQSELLPELVKNDEEFRIVQQRDLGHNTIEYLNLLQHDKLFSCRLCYTHAHWLWCEFHKTHAYRGPRDISVDAYVDHLNSDMGVVALVEEYYHWLSSCNDKAEAKRALKTLANVESLGDLLDSYNYSSVDADTSSYELMDFE.

This is an uncharacterized protein from Orgyia pseudotsugata (Douglas-fir tussock moth).